The following is a 384-amino-acid chain: Cell adhesion molecule CEACAM18 (384 aa).

Positions 1-30 (MDLSRPRWSLWRRVFLMASLLACGICQASG) are cleaved as a signal peptide. N-linked (GlcNAc...) asparagine glycosylation is found at asparagine 108, asparagine 112, asparagine 121, asparagine 162, and asparagine 270. The 88-residue stretch at 227-314 (PDYVLLRSNP…LIMYMDVRIQ (88 aa)) folds into the Ig-like C2-type domain. Residues cysteine 255 and cysteine 296 are joined by a disulfide bond. Residues 358 to 384 (QPLLNQDKSGSMSVHPRPEDKTRRASR) are disordered. Residues 359–369 (PLLNQDKSGSM) show a composition bias toward polar residues. Positions 373-384 (PRPEDKTRRASR) are enriched in basic and acidic residues.

This sequence belongs to the immunoglobulin superfamily. CEA family.

The polypeptide is Cell adhesion molecule CEACAM18 (Homo sapiens (Human)).